Here is a 434-residue protein sequence, read N- to C-terminus: 3-phosphoshikimate 1-carboxyvinyltransferase (434 aa).

Lys-15, Ser-16, and Arg-20 together coordinate 3-phosphoshikimate. Lys-15 serves as a coordination point for phosphoenolpyruvate. Gly-96 and Arg-124 together coordinate phosphoenolpyruvate. 3-phosphoshikimate-binding residues include Ser-169, Gln-171, Ser-195, Asp-319, and Lys-346. Position 171 (Gln-171) interacts with phosphoenolpyruvate. The active-site Proton acceptor is Asp-319. Arg-350 and Arg-394 together coordinate phosphoenolpyruvate.

It belongs to the EPSP synthase family. In terms of assembly, monomer.

It localises to the cytoplasm. The enzyme catalyses 3-phosphoshikimate + phosphoenolpyruvate = 5-O-(1-carboxyvinyl)-3-phosphoshikimate + phosphate. Its pathway is metabolic intermediate biosynthesis; chorismate biosynthesis; chorismate from D-erythrose 4-phosphate and phosphoenolpyruvate: step 6/7. Catalyzes the transfer of the enolpyruvyl moiety of phosphoenolpyruvate (PEP) to the 5-hydroxyl of shikimate-3-phosphate (S3P) to produce enolpyruvyl shikimate-3-phosphate and inorganic phosphate. This is 3-phosphoshikimate 1-carboxyvinyltransferase from Chlorobaculum parvum (strain DSM 263 / NCIMB 8327) (Chlorobium vibrioforme subsp. thiosulfatophilum).